The chain runs to 159 residues: Large ribosomal subunit protein uL11 (159 aa).

Positions 137–149 (EGKDPREVQREVD) are enriched in basic and acidic residues. Residues 137-159 (EGKDPREVQREVDSGAWDKLLGG) are disordered.

This sequence belongs to the universal ribosomal protein uL11 family. In terms of assembly, part of the ribosomal stalk of the 50S ribosomal subunit. Interacts with L10 and the large rRNA to form the base of the stalk. L10 forms an elongated spine to which L12 dimers bind in a sequential fashion forming a multimeric L10(L12)X complex.

Functionally, forms part of the ribosomal stalk which helps the ribosome interact with GTP-bound translation factors. This chain is Large ribosomal subunit protein uL11, found in Korarchaeum cryptofilum (strain OPF8).